Reading from the N-terminus, the 99-residue chain is Small integral membrane protein 14 (99 aa).

The Lumenal portion of the chain corresponds to 1–49 (MAEGGFDPCECVCSHEHAMRRLINLLRQSQSYCTDTECLQELPGPSSDN). A helical membrane pass occupies residues 50-70 (GISITMILMAWMVIAVILFLL). The Cytoplasmic portion of the chain corresponds to 71-99 (RPPNLRGSNLTGKPASPHNGQDPPAPPVD). The interval 78 to 99 (SNLTGKPASPHNGQDPPAPPVD) is disordered.

Its subcellular location is the endoplasmic reticulum membrane. This is Small integral membrane protein 14 (SMIM14) from Bos taurus (Bovine).